A 1102-amino-acid chain; its full sequence is DNA-directed RNA polymerase subunit beta (1102 aa).

The segment at 1081–1102 (LPGKRTPSRPIYESLSTEGNQD) is disordered.

This sequence belongs to the RNA polymerase beta chain family. As to quaternary structure, in cyanobacteria the RNAP catalytic core is composed of 2 alpha, 1 beta, 1 beta', 1 gamma and 1 omega subunit. When a sigma factor is associated with the core the holoenzyme is formed, which can initiate transcription.

It carries out the reaction RNA(n) + a ribonucleoside 5'-triphosphate = RNA(n+1) + diphosphate. Its function is as follows. DNA-dependent RNA polymerase catalyzes the transcription of DNA into RNA using the four ribonucleoside triphosphates as substrates. This Trichodesmium erythraeum (strain IMS101) protein is DNA-directed RNA polymerase subunit beta.